Here is a 548-residue protein sequence, read N- to C-terminus: Pentatricopeptide repeat-containing protein At5g15300 (548 aa).

PPR repeat units follow at residues 76–110, 111–145, 146–176, 177–211, 212–238, 239–273, 274–308, 314–348, 349–378, 379–409, and 415–445; these read DVSI…GVSP, DRYT…GFVL, NEYV…SAKA, HKVA…DQVA, WNVM…FTEK, DVVT…GEHP, DVVT…ASVS, GTPI…DLST, WNTL…KVWP, NEVT…MRDM, and NIKH…MKIE. Residues 450-525 form a type E motif region; that stretch reads VWRTLLGACK…PTGVSLIEED (76 aa).

The protein belongs to the PPR family. PCMP-E subfamily.

This chain is Pentatricopeptide repeat-containing protein At5g15300 (PCMP-E40), found in Arabidopsis thaliana (Mouse-ear cress).